We begin with the raw amino-acid sequence, 442 residues long: F-box/FBD/LRR-repeat protein At3g14710 (442 aa).

Positions 26–73 constitute an F-box domain; sequence DKFSSLLESVVSIILSQLPTAEAVSTSVLSKSWKNIWTNITDLHFDDT. LRR repeat units follow at residues 126–147, 151–172, and 173–194; these read NLQRLVVTCNDLEIISFSSLFP, SLVELRLRTKSILDISAPAILP, and NLKFLSLEDARIFNMSSVSKNL. An FBD domain is found at 370 to 414; that stretch reads VESPDCVTTMLKVLQIRNFKPNRLQISVLRYVLDNAEILGSVILS.

This Arabidopsis thaliana (Mouse-ear cress) protein is F-box/FBD/LRR-repeat protein At3g14710.